A 257-amino-acid chain; its full sequence is Adenosylcobinamide-GDP ribazoletransferase (257 aa).

A run of 6 helical transmembrane segments spans residues 7–27, 39–59, 61–81, 113–133, 143–163, and 196–216; these read QLTL…PTWV, RYFG…YEIT, GFLP…VVTG, IGTY…ILLS, VVTA…SLIF, and VLVL…GLVL.

It belongs to the CobS family. Mg(2+) serves as cofactor.

The protein resides in the cell inner membrane. It carries out the reaction alpha-ribazole + adenosylcob(III)inamide-GDP = adenosylcob(III)alamin + GMP + H(+). The catalysed reaction is alpha-ribazole 5'-phosphate + adenosylcob(III)inamide-GDP = adenosylcob(III)alamin 5'-phosphate + GMP + H(+). It functions in the pathway cofactor biosynthesis; adenosylcobalamin biosynthesis; adenosylcobalamin from cob(II)yrinate a,c-diamide: step 7/7. Functionally, joins adenosylcobinamide-GDP and alpha-ribazole to generate adenosylcobalamin (Ado-cobalamin). Also synthesizes adenosylcobalamin 5'-phosphate from adenosylcobinamide-GDP and alpha-ribazole 5'-phosphate. The protein is Adenosylcobinamide-GDP ribazoletransferase of Shewanella woodyi (strain ATCC 51908 / MS32).